The following is a 263-amino-acid chain: Endonuclease 8 (263 aa).

Catalysis depends on P2, which acts as the Schiff-base intermediate with DNA. E3 serves as the catalytic Proton donor. The active-site Proton donor; for beta-elimination activity is the K53. Q70, R125, and N169 together coordinate DNA. The FPG-type zinc-finger motif lies at 229-263 (KVFHRDGEACERCGGIIEKTTLSSRPFYWCPHCQK). The Proton donor; for delta-elimination activity role is filled by R253.

It belongs to the FPG family. Requires Zn(2+) as cofactor.

The catalysed reaction is 2'-deoxyribonucleotide-(2'-deoxyribose 5'-phosphate)-2'-deoxyribonucleotide-DNA = a 3'-end 2'-deoxyribonucleotide-(2,3-dehydro-2,3-deoxyribose 5'-phosphate)-DNA + a 5'-end 5'-phospho-2'-deoxyribonucleoside-DNA + H(+). In terms of biological role, involved in base excision repair of DNA damaged by oxidation or by mutagenic agents. Acts as a DNA glycosylase that recognizes and removes damaged bases. Has a preference for oxidized pyrimidines, such as thymine glycol, 5,6-dihydrouracil and 5,6-dihydrothymine. Has AP (apurinic/apyrimidinic) lyase activity and introduces nicks in the DNA strand. Cleaves the DNA backbone by beta-delta elimination to generate a single-strand break at the site of the removed base with both 3'- and 5'-phosphates. This is Endonuclease 8 from Salmonella heidelberg (strain SL476).